A 333-amino-acid chain; its full sequence is Phosphate acyltransferase (333 aa).

It belongs to the PlsX family. Homodimer. Probably interacts with PlsY.

The protein resides in the cytoplasm. It carries out the reaction a fatty acyl-[ACP] + phosphate = an acyl phosphate + holo-[ACP]. The protein operates within lipid metabolism; phospholipid metabolism. Its function is as follows. Catalyzes the reversible formation of acyl-phosphate (acyl-PO(4)) from acyl-[acyl-carrier-protein] (acyl-ACP). This enzyme utilizes acyl-ACP as fatty acyl donor, but not acyl-CoA. This is Phosphate acyltransferase from Cellvibrio japonicus (strain Ueda107) (Pseudomonas fluorescens subsp. cellulosa).